Consider the following 207-residue polypeptide: Outer-membrane lipoprotein carrier protein (207 aa).

The first 21 residues, 1–21, serve as a signal peptide directing secretion; sequence MRLIRMLLATALTFSVIPAHA.

This sequence belongs to the LolA family. As to quaternary structure, monomer.

It localises to the periplasm. Functionally, participates in the translocation of lipoproteins from the inner membrane to the outer membrane. Only forms a complex with a lipoprotein if the residue after the N-terminal Cys is not an aspartate (The Asp acts as a targeting signal to indicate that the lipoprotein should stay in the inner membrane). In Pseudomonas syringae pv. tomato (strain ATCC BAA-871 / DC3000), this protein is Outer-membrane lipoprotein carrier protein.